Here is a 360-residue protein sequence, read N- to C-terminus: 3-isopropylmalate dehydrogenase (360 aa).

76 to 89 (GPKWDKLDMAIRPE) is a binding site for NAD(+). Positions 96, 106, 134, and 224 each coordinate substrate. Residues Asp224, Asp248, and Asp252 each contribute to the Mg(2+) site. 282 to 294 (GSAPDIAGQNMAN) provides a ligand contact to NAD(+).

Belongs to the isocitrate and isopropylmalate dehydrogenases family. LeuB type 1 subfamily. In terms of assembly, homodimer. The cofactor is Mg(2+). Mn(2+) serves as cofactor.

Its subcellular location is the cytoplasm. It carries out the reaction (2R,3S)-3-isopropylmalate + NAD(+) = 4-methyl-2-oxopentanoate + CO2 + NADH. Its pathway is amino-acid biosynthesis; L-leucine biosynthesis; L-leucine from 3-methyl-2-oxobutanoate: step 3/4. Its function is as follows. Catalyzes the oxidation of 3-carboxy-2-hydroxy-4-methylpentanoate (3-isopropylmalate) to 3-carboxy-4-methyl-2-oxopentanoate. The product decarboxylates to 4-methyl-2 oxopentanoate. The protein is 3-isopropylmalate dehydrogenase of Hahella chejuensis (strain KCTC 2396).